A 326-amino-acid polypeptide reads, in one-letter code: Flotillin-like protein FloA (326 aa).

The chain crosses the membrane as a helical span at residues 3 to 23 (FTTIVVILLVIACIVVLFFIG).

It belongs to the flotillin-like FloA family. In terms of assembly, homooligomerizes.

The protein resides in the cell membrane. It is found in the membrane raft. Its function is as follows. Found in functional membrane microdomains (FMM) that may be equivalent to eukaryotic membrane rafts. FMMs are highly dynamic and increase in number as cells age. Flotillins are thought to be important factors in membrane fluidity. This is Flotillin-like protein FloA from Desulforapulum autotrophicum (strain ATCC 43914 / DSM 3382 / VKM B-1955 / HRM2) (Desulfobacterium autotrophicum).